Here is a 750-residue protein sequence, read N- to C-terminus: Olfactomedin-like protein 2B (750 aa).

Positions 1 to 22 (MAKPRLLVLYFALIVVPAWVSS) are cleaved as a signal peptide. 2 coiled-coil regions span residues 40–68 (AEDE…KVKA) and 179–213 (KLEE…GKEN). N-linked (GlcNAc...) asparagine glycans are attached at residues Asn-187 and Asn-213. Disordered regions lie at residues 346-437 (TRRP…PPAV) and 452-484 (VPPT…PEEE). 2 stretches are compositionally biased toward polar residues: residues 354–384 (QGHS…SDPS) and 393–413 (PTLQ…LQPS). Positions 416–430 (VPATTVAHTATQQPA) are enriched in low complexity. The region spanning 493 to 750 (RCKDTLSTIT…QVTYHVIFAY (258 aa)) is the Olfactomedin-like domain. A disulfide bridge connects residues Cys-494 and Cys-680. An N-linked (GlcNAc...) asparagine glycan is attached at Asn-695.

As to quaternary structure, homodimer. Binds to heparin and chondroitin sulfate E. O-glycosylated and N-glycosylated.

The protein resides in the secreted. The chain is Olfactomedin-like protein 2B (OLFML2B) from Homo sapiens (Human).